The sequence spans 734 residues: Subtilisin-like protease (734 aa).

A signal peptide spans 1–20 (MTCICIFSIAFLLSFHLTTA). The Inhibitor I9 domain maps to 28 to 109 (TYIVHVDKPD…AKLEKVLTLH (82 aa)). The Peptidase S8 domain occupies 114–591 (PNFLGLYQNM…AGHVNPSKAS (478 aa)). Catalysis depends on D141, which acts as the Charge relay system. N-linked (GlcNAc...) asparagine glycosylation occurs at N172. H199 (charge relay system) is an active-site residue. 2 N-linked (GlcNAc...) asparagine glycosylation sites follow: N222 and N306. In terms of domain architecture, PA spans 357–442 (PLVYPGTSDE…THVGYAAGEM (86 aa)). 2 N-linked (GlcNAc...) asparagine glycosylation sites follow: N448 and N509. The Charge relay system role is filled by S524. A glycan (N-linked (GlcNAc...) asparagine) is linked at N652.

It belongs to the peptidase S8 family.

Its subcellular location is the secreted. The protein resides in the extracellular space. It is found in the apoplast. Its function is as follows. Required for arbuscular mycorrhiza (AM) development during AM symbiosis with AM fungi (e.g. Glomeromycota intraradices). The protein is Subtilisin-like protease of Petunia hybrida (Petunia).